The sequence spans 304 residues: Non-specific ribonucleoside hydrolase RihC (304 aa).

The active site involves H233.

Belongs to the IUNH family. RihC subfamily.

In terms of biological role, hydrolyzes both purine and pyrimidine ribonucleosides with a broad-substrate specificity. In Escherichia coli O127:H6 (strain E2348/69 / EPEC), this protein is Non-specific ribonucleoside hydrolase RihC.